We begin with the raw amino-acid sequence, 215 residues long: MADS-box transcription factor 4 (215 aa).

The region spanning methionine 1–lysine 61 is the MADS-box domain. Residues histidine 89–glutamate 175 form the K-box domain.

In terms of assembly, may interact with the K-box of MADS16. As to expression, highly expressed in lodicules, at intermediate levels in stamens, and weakly in carpels. Expressed in pollen.

It is found in the nucleus. Its function is as follows. Probable transcription factor involved in the development of floral organs. B-class protein required for normal development of lodicules and stamens (whorls 2 and 3). May function as a heterodimer with MADS16. The polypeptide is MADS-box transcription factor 4 (MADS4) (Oryza sativa subsp. japonica (Rice)).